The following is a 229-amino-acid chain: Extracellular small neutral protease (229 aa).

The signal sequence occupies residues 1–28; sequence MRMPLSVLTAAGLSLATLGLGTAGPASA. Positions 29-81 are excised as a propeptide; the sequence is TPTAEGAPVVAYDGSPSAGSPADAKAEAAANRAFFEAVLRSVAEKRAANPKST. The Ca(2+) site is built by aspartate 159 and threonine 161. Histidine 166 provides a ligand contact to Zn(2+). Residue glutamate 167 is part of the active site. Zn(2+) is bound by residues histidine 170 and aspartate 176. Cysteines 182 and 195 form a disulfide.

Belongs to the peptidase M7 family. In terms of assembly, monomer. Ca(2+) is required as a cofactor. The cofactor is Zn(2+).

It localises to the secreted. The catalysed reaction is Hydrolyzes proteins with a preference for Tyr or Phe in the P1' position. Has no action on amino-acid p-nitroanilides.. Milk hydrolyzing. The chain is Extracellular small neutral protease (snpA) from Streptomyces sp. (strain C5).